We begin with the raw amino-acid sequence, 481 residues long: Aspartyl/glutamyl-tRNA(Asn/Gln) amidotransferase subunit B (481 aa).

Belongs to the GatB/GatE family. GatB subfamily. As to quaternary structure, heterotrimer of A, B and C subunits.

The enzyme catalyses L-glutamyl-tRNA(Gln) + L-glutamine + ATP + H2O = L-glutaminyl-tRNA(Gln) + L-glutamate + ADP + phosphate + H(+). It catalyses the reaction L-aspartyl-tRNA(Asn) + L-glutamine + ATP + H2O = L-asparaginyl-tRNA(Asn) + L-glutamate + ADP + phosphate + 2 H(+). Its function is as follows. Allows the formation of correctly charged Asn-tRNA(Asn) or Gln-tRNA(Gln) through the transamidation of misacylated Asp-tRNA(Asn) or Glu-tRNA(Gln) in organisms which lack either or both of asparaginyl-tRNA or glutaminyl-tRNA synthetases. The reaction takes place in the presence of glutamine and ATP through an activated phospho-Asp-tRNA(Asn) or phospho-Glu-tRNA(Gln). The protein is Aspartyl/glutamyl-tRNA(Asn/Gln) amidotransferase subunit B of Pseudomonas syringae pv. tomato (strain ATCC BAA-871 / DC3000).